A 144-amino-acid chain; its full sequence is UPF0179 protein PF1381 (144 aa).

Belongs to the UPF0179 family.

This chain is UPF0179 protein PF1381, found in Pyrococcus furiosus (strain ATCC 43587 / DSM 3638 / JCM 8422 / Vc1).